The chain runs to 224 residues: Dickkopf-related protein 4 (224 aa).

The first 18 residues, 1 to 18 (MVAAVLLGLSWLCSPLGA), serve as a signal peptide directing secretion. The interval 41 to 90 (CLSDTDCNTRKFCLQPRDEKPFCATCRGLRRRCQRDAMCCPGTLCVNDVC) is DKK-type Cys-1. The disordered stretch occupies residues 109–139 (GTHAEGTTGHPVQENQPKRKPSIKKSQGRKG). Over residues 126–136 (KRKPSIKKSQG) the composition is skewed to basic residues. 5 cysteine pairs are disulfide-bonded: cysteine 145-cysteine 157, cysteine 151-cysteine 166, cysteine 156-cysteine 194, cysteine 176-cysteine 202, and cysteine 196-cysteine 218. Positions 145–218 (CLRTFDCGPG…NRQHARLRVC (74 aa)) are DKK-type Cys-2.

It belongs to the dickkopf family. As to quaternary structure, interacts with LRP5 and LRP6. In terms of processing, appears to be not glycosylated. Post-translationally, can be proteolytically processed by a furin-like protease. In terms of tissue distribution, expressed in cerebellum, T-cells, esophagus and lung.

The protein resides in the secreted. Its function is as follows. Antagonizes canonical Wnt signaling by inhibiting LRP5/6 interaction with Wnt and by forming a ternary complex with the transmembrane protein KREMEN that promotes internalization of LRP5/6. DKKs play an important role in vertebrate development, where they locally inhibit Wnt regulated processes such as antero-posterior axial patterning, limb development, somitogenesis and eye formation. In the adult, Dkks are implicated in bone formation and bone disease, cancer and Alzheimer disease. The sequence is that of Dickkopf-related protein 4 (DKK4) from Homo sapiens (Human).